Here is a 458-residue protein sequence, read N- to C-terminus: RuvB-like protein 1 (458 aa).

73-80 (GPPGTGKT) provides a ligand contact to ATP.

Belongs to the RuvB family. As to quaternary structure, interacts with FRI, and with FLX and FES1, two component of the transcription activator complex FRI-C. Interacts with the disease resistance genes RPM1 and RPP5.

It is found in the nucleus. It carries out the reaction ATP + H2O = ADP + phosphate + H(+). Functionally, proposed core component of the chromatin remodeling INO80 complex which is involved in transcriptional regulation, DNA replication and probably DNA repair. Component of the NuA4 histone acetyltransferase complex which is involved in transcriptional activation of select genes principally by acetylation of nucleosomal histones H4 and H2A. Has single-stranded DNA-stimulated ATPase and ATP-dependent DNA helicase (3' to 5') activity suggesting a role in nuclear processes such as recombination and transcription. This Arabidopsis thaliana (Mouse-ear cress) protein is RuvB-like protein 1 (RIN1).